The sequence spans 616 residues: Chaperone protein HscA homolog (616 aa).

This sequence belongs to the heat shock protein 70 family.

Its function is as follows. Probable chaperone. Has a low intrinsic ATPase activity which is markedly stimulated by HscB. In Vibrio cholerae serotype O1 (strain ATCC 39315 / El Tor Inaba N16961), this protein is Chaperone protein HscA homolog.